A 381-amino-acid chain; its full sequence is Heterogeneous nuclear rnp K-like protein 2 (381 aa).

Residues 1–34 (MSQFFEAATPVAIPTNNTNGGSSDAGSAATGGAP) are disordered. A compositionally biased stretch (low complexity) spans 15 to 33 (TNNTNGGSSDAGSAATGGA). KH domains lie at 43 to 107 (TINH…IGDI), 156 to 221 (IGYV…LIEI), and 258 to 326 (NTRI…ESML). The disordered stretch occupies residues 357–381 (RSDSASFLEEKEEPQKNHDNKEEQS). Ser-358, Ser-360, and Ser-362 each carry phosphoserine. The span at 369 to 381 (EPQKNHDNKEEQS) shows a compositional bias: basic and acidic residues.

This sequence belongs to the HEK2 family. As to quaternary structure, binds RNA. Post-translationally, phosphorylated by the plasma membrane-Anchored casein kinase YCK1. Phosphorylation at its C-terminus reduces its RNA-binding capacity.

It is found in the cytoplasm. The protein localises to the P-body. It localises to the nucleus. Its subcellular location is the chromosome. The protein resides in the telomere. Functionally, RNA-binding protein involved in the correct localization of transcripts in the cell. RNA localization is a widespread mechanism for achieving localized protein synthesis. Required for the asymmetric localization to the daughter cell nucleus of the ASH1 transcript, coding for a specific repressor of transcription. Overexpression inhibits translation of the ASH1 transcript. Involved in the stability of transcripts, like the MTL1 mRNA. Involved in structural and functional organization of telomeric chromatin and regulates silencing at the HMR locus. This Saccharomyces cerevisiae (strain RM11-1a) (Baker's yeast) protein is Heterogeneous nuclear rnp K-like protein 2 (HEK2).